Reading from the N-terminus, the 477-residue chain is Asparaginyl-tRNA synthetase (477 aa).

The N-terminal 14 residues, 1–14 (MLGARRLLGALRLC), are a transit peptide targeting the mitochondrion. Lysine 353 is subject to N6-acetyllysine.

It belongs to the class-II aminoacyl-tRNA synthetase family. As to quaternary structure, homodimer. Expressed in brain and inner ear, including the cochlear epithelium and organ of Corti.

The protein localises to the mitochondrion matrix. It is found in the mitochondrion. The enzyme catalyses tRNA(Asn) + L-asparagine + ATP = L-asparaginyl-tRNA(Asn) + AMP + diphosphate + H(+). Its function is as follows. Mitochondrial aminoacyl-tRNA synthetase that catalyzes the specific attachment of the asparagine amino acid (aa) to the homologous transfer RNA (tRNA), further participating in protein synthesis. The reaction occurs in a two steps: asparagine is first activated by ATP to form Asn-AMP and then transferred to the acceptor end of tRNA(Asn). This Mus musculus (Mouse) protein is Asparaginyl-tRNA synthetase.